The primary structure comprises 429 residues: Adenylosuccinate synthetase (429 aa).

GTP-binding positions include 12–18 and 40–42; these read GDEGKGK and GHT. D13 acts as the Proton acceptor in catalysis. Mg(2+)-binding residues include D13 and G40. IMP-binding positions include 13–16, 38–41, T128, R142, Q223, T238, and R302; these read DEGK and NAGH. H41 functions as the Proton donor in the catalytic mechanism. Residue 298–304 participates in substrate binding; the sequence is VNTGRPR. Residues R304, 330 to 332, and 412 to 414 each bind GTP; these read KLD and GVG.

It belongs to the adenylosuccinate synthetase family. Homodimer. Requires Mg(2+) as cofactor.

It is found in the cytoplasm. It carries out the reaction IMP + L-aspartate + GTP = N(6)-(1,2-dicarboxyethyl)-AMP + GDP + phosphate + 2 H(+). The protein operates within purine metabolism; AMP biosynthesis via de novo pathway; AMP from IMP: step 1/2. In terms of biological role, plays an important role in the de novo pathway of purine nucleotide biosynthesis. Catalyzes the first committed step in the biosynthesis of AMP from IMP. The chain is Adenylosuccinate synthetase from Corynebacterium urealyticum (strain ATCC 43042 / DSM 7109).